The primary structure comprises 359 residues: DNA integrity scanning protein DisA (359 aa).

Residues 7–145 (DDIFRATLAA…AGRRYVLDGA (139 aa)) form the DAC domain. ATP is bound by residues Gly-74, Leu-92, and 105 to 109 (TRHRT).

Belongs to the DisA family. Homooctamer. The cofactor is Mg(2+).

It carries out the reaction 2 ATP = 3',3'-c-di-AMP + 2 diphosphate. In terms of biological role, participates in a DNA-damage check-point that is active prior to asymmetric division when DNA is damaged. DisA forms globular foci that rapidly scan along the chromosomes during sporulation, searching for lesions. When a lesion is present, DisA pauses at the lesion site. This triggers a cellular response that culminates in a temporary block in sporulation initiation. Also has diadenylate cyclase activity, catalyzing the condensation of 2 ATP molecules into cyclic di-AMP (c-di-AMP). c-di-AMP acts as a signaling molecule that couples DNA integrity with progression of sporulation. The rise in c-di-AMP level generated by DisA while scanning the chromosome, operates as a positive signal that advances sporulation; upon encountering a lesion, the DisA focus arrests at the damaged site and halts c-di-AMP synthesis. This is DNA integrity scanning protein DisA from Parafrankia sp. (strain EAN1pec).